The primary structure comprises 397 residues: Lysophospholipid transporter LplT (397 aa).

11 consecutive transmembrane segments (helical) span residues 21 to 41 (SAQFLSAFGDNALLFATLALL), 53 to 73 (ILQMVFVGAYILFAPFVGQVA), 91 to 111 (LGAASICFGFNPFIGYTLVGI), 139 to 159 (LMESSTIAAILLGSVAGGVLA), 164 to 184 (LAALGICAVVYAGAVVANLFI), 229 to 249 (WGAGVTLRFLLVLWVPTALGI), 257 to 277 (YLNAMVAVGIVVGAGAAAKLV), 281 to 301 (TVRRCMPAGILIGVGVLFFSL), 304 to 324 (ALLPAYGLLILIGILGGFFIV), 344 to 364 (IAVQNLGENTAMLLMLGLYSL), and 372 to 392 (VVGIGVGFGALFALAITGLWI).

It belongs to the major facilitator superfamily. LplT (TC 2.A.1.42) family.

It localises to the cell inner membrane. In terms of biological role, catalyzes the facilitated diffusion of 2-acyl-glycero-3-phosphoethanolamine (2-acyl-GPE) into the cell. This chain is Lysophospholipid transporter LplT, found in Enterobacter sp. (strain 638).